The following is a 350-amino-acid chain: Alcohol dehydrogenase 1 (350 aa).

The Zn(2+) site is built by Cys-46, His-69, Cys-100, Cys-103, Cys-106, Cys-114, and Cys-156. Residues 180–186 (GAAGGLG), Asp-204, Lys-209, 271–273 (VGL), and Arg-343 contribute to the NAD(+) site.

This sequence belongs to the zinc-containing alcohol dehydrogenase family. In terms of assembly, homotetramer. Zn(2+) serves as cofactor.

It localises to the cytoplasm. It catalyses the reaction a primary alcohol + NAD(+) = an aldehyde + NADH + H(+). The enzyme catalyses a secondary alcohol + NAD(+) = a ketone + NADH + H(+). The sequence is that of Alcohol dehydrogenase 1 (ADH1) from Kluyveromyces lactis (strain ATCC 8585 / CBS 2359 / DSM 70799 / NBRC 1267 / NRRL Y-1140 / WM37) (Yeast).